Consider the following 319-residue polypeptide: MKTIGLLTSGGDAPGMNAAIRAVVRSAIYYGCKVYGINRGYKGLLEEDLTEMNLSSVGDIIHRGGTILKSSRCEEFKTEEGRLKAVKILKKYKIDCLVVIGGDGSFAGAQKLSDLGFPAIGIPGTIDNDLAYTDYTIGFDTAMNTIIDAIGKIRDTSSSHERVNIVEVMGRHCGDLALYAGLAGGAETIIVPEVEITVDEVALRLKTTQKRGKRHSIIVLAEGVGSASDLEKELKKESGADLRVTVLGHVQRGGSPTVSDRILASRLGVRAVELLLDGKSARVVGIKENKIIDLEISEALAQKKVFDKEAYEMAKILSI.

Gly-11 contributes to the ATP binding site. Position 21–25 (21–25 (RAVVR)) interacts with ADP. Residues 72-73 (RC) and 102-105 (GDGS) each bind ATP. Mg(2+) is bound at residue Asp-103. 125-127 (TID) lines the substrate pocket. Asp-127 acts as the Proton acceptor in catalysis. Arg-154 contributes to the ADP binding site. Residues Arg-162 and 169–171 (MGR) each bind substrate. ADP contacts are provided by residues 185–187 (GAE), Arg-211, and 213–215 (KRH). Residues Glu-222, Arg-243, and 249–252 (HVQR) contribute to the substrate site.

It belongs to the phosphofructokinase type A (PFKA) family. ATP-dependent PFK group I subfamily. Prokaryotic clade 'B1' sub-subfamily. Homotetramer. It depends on Mg(2+) as a cofactor.

It localises to the cytoplasm. The catalysed reaction is beta-D-fructose 6-phosphate + ATP = beta-D-fructose 1,6-bisphosphate + ADP + H(+). It participates in carbohydrate degradation; glycolysis; D-glyceraldehyde 3-phosphate and glycerone phosphate from D-glucose: step 3/4. With respect to regulation, allosterically activated by ADP and other diphosphonucleosides, and allosterically inhibited by phosphoenolpyruvate. Functionally, catalyzes the phosphorylation of D-fructose 6-phosphate to fructose 1,6-bisphosphate by ATP, the first committing step of glycolysis. This chain is ATP-dependent 6-phosphofructokinase, found in Clostridioides difficile (strain 630) (Peptoclostridium difficile).